Here is a 494-residue protein sequence, read N- to C-terminus: MIKFALALTLCLAGASLSLAQHNPQWWGNRNTIVHLFEWKWSDIAEECETFLAPRGFAGVQVSPVNENIISAGRPWWERYQPISYKLTTRSGNEEEFADMVRRCNDVGIRIYVDVLLNHMSGDFDGVAVGTAGTEAEPSKKSFPGVPYSAQDFHPSCEITDWNDRFQVQQCELVGLKDLNQHSDYVRSKLIEFLDHLIELGVAGFRVDAAKHMAAEDLEYIYGSLSNLNIEHGFPHNARPFIFQEVIDHGHETVSREEYNGLGAVTEFRFSEEIGRAFRGNNALKWLQSWGTDWGFLSSEQALTFVDNHDNQRDMGSVLNYKSPRQYKMATAFHLAYPYGISRVMSSFAFDDHDTPPPQDAQENIISPEFDEDGACVNGWICEHRWRQIYAMVGFKNAVRDTELSAWWDNGDNQISFCRGNKGFLAVNNNQYDLSQELNTCLPAGEYCDVISGSLIDGACTGKSVHVNEHGYGYIHIGSDDFDGVLALHVNAKV.

A signal peptide spans 1–20; the sequence is MIKFALALTLCLAGASLSLA. A Pyrrolidone carboxylic acid modification is found at Gln21. An intrachain disulfide couples Cys48 to Cys104. Ca(2+) is bound by residues Asn118, Gln169, and Asp178. The cysteines at positions 157 and 171 are disulfide-linked. Arg206 contacts chloride. Asp208 functions as the Nucleophile in the catalytic mechanism. His212 contacts Ca(2+). Residue Glu245 is the Proton donor of the active site. Asn308 and Arg343 together coordinate chloride. Intrachain disulfides connect Cys376/Cys382, Cys418/Cys441, and Cys448/Cys460.

Belongs to the glycosyl hydrolase 13 family. Monomer. The cofactor is Ca(2+). Chloride is required as a cofactor.

It is found in the secreted. It catalyses the reaction Endohydrolysis of (1-&gt;4)-alpha-D-glucosidic linkages in polysaccharides containing three or more (1-&gt;4)-alpha-linked D-glucose units.. This chain is Alpha-amylase-related protein (Amyrel), found in Drosophila lini (Fruit fly).